An 81-amino-acid polypeptide reads, in one-letter code: uncharacterized protein (81 aa).

This is an uncharacterized protein from Bacillus subtilis (strain 168).